Reading from the N-terminus, the 1520-residue chain is Putative lipoprotein AcfD homolog (1520 aa).

Positions 1–23 are cleaved as a signal peptide; it reads MNKKFKYKKSLLAAILSATLLAG. Disordered stretches follow at residues 22–107 and 226–247; these read AGCD…GATC and NAAT…TTPG. A lipid anchor (N-palmitoyl cysteine) is attached at Cys-24. The S-diacylglycerol cysteine moiety is linked to residue Cys-24. Residues 31-42 show a composition bias toward low complexity; it reads SSSDTPPVDSGT. Positions 51 to 77 are enriched in pro residues; sequence DPTPNPEPTPEPTPDPEPTPEPIPDPE. Residues 97–107 show a composition bias toward polar residues; that stretch reads GGSQRVTGATC. Residues 234 to 247 are compositionally biased toward low complexity; sequence STHTSPVVPVTTPG. Residues 1081–1381 enclose the Peptidase M60 domain; that stretch reads GNMQSTGLWA…MYAQLKEWAE (301 aa). Residues 1498-1520 form a disordered region; the sequence is DLPKPEQGPETINQVTEHKMSAE.

To V.cholerae AcfD (VC_0845).

It localises to the cell inner membrane. Its function is as follows. Involved in a type II secretion system (T2SS, formerly general secretion pathway, GSP) for the export of folded proteins across the outer membrane. This chain is Putative lipoprotein AcfD homolog (yghJ), found in Escherichia coli (strain K12).